We begin with the raw amino-acid sequence, 540 residues long: Zinc transporter ZIP5 (540 aa).

The N-terminal stretch at 1–20 (MMGSPVSHLLAGFCVWVVLG) is a signal peptide. The Extracellular segment spans residues 21-212 (WVGGSVPNLG…PAPPGDLLSA (192 aa)). N-linked (GlcNAc...) asparagine glycosylation is present at N50. Positions 78–101 (HGPLTGRAASPAADNSTHRPQNPE) are disordered. Residues 90-101 (ADNSTHRPQNPE) show a composition bias toward polar residues. N-linked (GlcNAc...) asparagine glycosylation occurs at N160. A helical transmembrane segment spans residues 213–233 (LLQSALAVLLLSLPSPLSLLL). At 234–244 (LRLLGPRLLRP) the chain is on the cytoplasmic side. The helical transmembrane segment at 245 to 265 (LLGFLGALAVGTLCGDALLHL) threads the bilayer. The Extracellular portion of the chain corresponds to 266–287 (LPHAQEGRHAGPGGLPEKDLGP). Residues 288–308 (GLSVLGGLFLLFVLENMLGLL) form a helical membrane-spanning segment. Residues 309-444 (RHRGLRPRCC…LLQSGLSFRR (136 aa)) lie on the Cytoplasmic side of the membrane. Residues 324-377 (NLETRNLDPENGSGMALQPLQAAPEPGAQGQREKNSQHPPALAPPGHQGHSHGH) are disordered. Position 336 is a phosphoserine (S336). Residue H375 is modified to Pros-methylhistidine. Residues 445–465 (LLLLSLVSGALGLGGAVLGVG) form a helical membrane-spanning segment. The Extracellular portion of the chain corresponds to 466–470 (LSLGP). A helical transmembrane segment spans residues 471-491 (VPLTPWVFGVTAGVFLYVALV). Over 492-508 (DMLPALLRPPEPLPTPH) the chain is Cytoplasmic. The chain crosses the membrane as a helical span at residues 509–529 (VLLQGLGLLLGGGLMLAITLL). The Extracellular portion of the chain corresponds to 530–540 (EERLLPVTTEG).

This sequence belongs to the ZIP transporter (TC 2.A.5) family. Homodimer. Post-translationally, methylated at His-375 by METTL9. N-Glycosylated. As to expression, expressed in liver, kidney, pancreas, small intestine, colon, spleen, fetal liver and fetal kidney.

It localises to the basolateral cell membrane. The enzyme catalyses Zn(2+)(in) = Zn(2+)(out). Its function is as follows. Uniporter that transports zinc(2+) into polarized cells of enterocytes, pancreatic acinar and endoderm cells across the basolateral membrane and participates, notably, in zinc excretion from the intestine by the uptake of zinc from the blood into the intestine. The transport mechanism is temperature- and concentration-dependent and saturable. In addition, is also a high affinity copper transporter in vitro. Also may regulate glucose-stimulated insulin secretion (GSIS) in islets primarily through the zinc-activated SIRT1-PPARGC1A axis. Could regulate the BMP/TGF-beta (bone morphogenetic protein/transforming growth factor-beta) signaling pathway and modulates extracellular matrix (ECM) proteins of the sclera. Plays a role in eye development. The chain is Zinc transporter ZIP5 from Homo sapiens (Human).